The primary structure comprises 401 residues: Chromate transport protein (401 aa).

A run of 12 helical transmembrane segments spans residues 26–46 (LVMY…ALAG), 67–87 (GLAL…IYLG), 93–113 (IVGA…MVLA), 124–144 (LTWM…IIAI), 172–192 (VITE…VWFW), 214–234 (AASG…GVFF), 237–257 (AGAF…GGVV), 272–294 (VAVA…YLVA), 299–321 (ACVA…APYF), 330–350 (ILAF…GAVI), 356–376 (SIVD…LLKF), and 379–399 (LSEP…YPLL).

It belongs to the chromate ion transporter (CHR) (TC 2.A.51) family.

Its subcellular location is the cell inner membrane. This protein reduces chromate accumulation and is essential for chromate resistance. This chain is Chromate transport protein, found in Cupriavidus metallidurans (strain ATCC 43123 / DSM 2839 / NBRC 102507 / CH34) (Ralstonia metallidurans).